The following is a 382-amino-acid chain: Bestrophin-6 (382 aa).

A run of 4 helical transmembrane segments spans residues 29-49, 68-88, 231-251, and 265-285; these read WKLIHRELFMWLVLYYTVLAI, FINFEPSILTFMLSFFVTTIV, LAYPQVIFFAVRLYFVICAFA, and VIHYYFPIVTVFQFICLMGWL.

The protein belongs to the anion channel-forming bestrophin (TC 1.A.46) family. Calcium-sensitive chloride channel subfamily.

It localises to the membrane. The chain is Bestrophin-6 (best-6) from Caenorhabditis elegans.